A 756-amino-acid polypeptide reads, in one-letter code: Rab11 family-interacting protein 3 (756 aa).

Residues 1–24 are compositionally biased toward pro residues; it reads MASAPPASPPGSEPPGPDPEPGGP. The tract at residues 1-204 is disordered; it reads MASAPPASPP…SEPVGSQEDG (204 aa). The tract at residues 2–435 is important for binding to DYNC1LI1; sequence ASAPPASPPG…RLSSKKVARY (434 aa). Low complexity predominate over residues 27-39; that stretch reads PGAAQLAPGPAEL. The residue at position 52 (Ser-52) is a Phosphoserine. The span at 53–68 shows a compositional bias: low complexity; it reads PGLDEPAPGAAADGGA. A compositionally biased stretch (pro residues) spans 84-94; that stretch reads DPGPSAPPPRS. The residue at position 102 (Ser-102) is a Phosphoserine; by CDK1. EF-hand domains follow at residues 202–237 and 234–269; these read EDGPRLRAVFDALDGDGDGFVRIEDFIQFATVYGAE and YGAEQVKDLTKYLDPSGLGVISFEDFYQGITAIRNG. Ca(2+) is bound by residues Asp-215, Asp-217, Asp-219, Asp-226, Asp-247, Ser-249, and Asp-258. Residues Ser-281, Ser-348, Ser-488, Ser-538, Ser-647, and Ser-648 each carry the phosphoserine modification. The interval 484-588 is ARF-binding domain (ABD); the sequence is GEQHSRLRQE…LLDEIESLTL (105 aa). Residues 485–694 are a coiled coil; it reads EQHSRLRQEN…NGQIITLSIQ (210 aa). A disordered region spans residues 645–664; it reads RSSSMGLQEYHSRARESELE. Residues 654–664 show a composition bias toward basic and acidic residues; it reads YHSRARESELE. The FIP-RBD domain maps to 694-756; the sequence is QGAKSLFSTA…ETNPSILEVK (63 aa).

Homodimer. Interacts with RAB11A; the interaction is direct and is required for the recruitment to endosomes. Interacts with RAB11B. Forms a ternary complex with RAB11A and dynein intermediate chain DYNC1LI1; RAB11FIP3 links RAB11A to dynein and the interaction regulates endocytic trafficking. Interacts with dynein intermediate chain and dynactin (DCTN1); the interaction activates dynein processivity. Interacts with ARF6 and EXOC7; the interaction serves for recruitment and tethering of recycling endosomes-derived vesicles to the cleavage furrow/midbody. Interacts with RACGAP1/MgcRacGAP; the interaction occurs at late telophase and is required for recruitment and tethering of recycling endosomes-derived vesicles to the cleavage furrow/midbody. Forms a complex with RAB11A and Rabin8/RAB3IP, probably a heterohexamer with two of each protein subunit, where RAB3IP and RAB11FIP3 simultaneously bind to RAB11A; the complex promotes preciliary trafficking. Forms a complex containing RAB11A, ASAP1, RAB3IP, RAP11FIP3 and ARF4; the complex promotes preciliary trafficking; the complex binds to RHO in photoreceptor cells and promotes RHO ciliary transport. Interacts with RAB11FIP4. Interacts with RAB25. In terms of processing, phosphorylated at Ser-102 by CDK1 during metaphase, and dephosphorylated as cells enter telophase.

It localises to the endosome membrane. It is found in the recycling endosome membrane. The protein resides in the cytoplasm. The protein localises to the cytoskeleton. Its subcellular location is the microtubule organizing center. It localises to the centrosome. It is found in the cleavage furrow. The protein resides in the midbody. The protein localises to the golgi apparatus membrane. Its subcellular location is the golgi apparatus. It localises to the trans-Golgi network membrane. In terms of biological role, downstream effector molecule for Rab11 GTPase which is involved in endocytic trafficking, cytokinesis and intracellular ciliogenesis by participating in membrane delivery. Recruited by Rab11 to endosomes where it links Rab11 to dynein motor complex. The functional Rab11-RAB11FIP3-dynein complex regulates the movement of peripheral sorting endosomes (SE) along microtubule tracks toward the microtubule organizing center/centrosome, generating the endocytic recycling compartment (ERC) during interphase of cell cycle. Facilitates the interaction between dynein and dynactin and activates dynein processivity. Binding with ASAP1 is needed to regulate the pericentrosomal localization of recycling endosomes. The Rab11-RAB11FIP3 complex is also implicated in the transport during telophase of vesicles derived from recycling endosomes to the cleavage furrow via centrosome-anchored microtubules, where the vesicles function to deliver membrane during late cytokinesis and abscission. The recruitment of Rab11-RAB11FIP3-containing endosomes to the cleavage furrow and tethering to the midbody is co-mediated by RAB11FIP3 interaction with ARF6-exocyst and RACGAP1-MKLP1 tethering complexes. Also involved in the Rab11-Rabin8-Rab8 ciliogenesis cascade by facilitating the orderly assembly of a ciliary targeting complex containing Rab11, ASAP1, Rabin8/RAB3IP, RAB11FIP3 and ARF4, which directs preciliary vesicle trafficking to mother centriole and ciliogenesis initiation. Also promotes the activity of Rab11 and ASAP1 in the ARF4-dependent Golgi-to-cilia transport of the sensory receptor rhodopsin. Competes with WDR44 for binding to Rab11, which controls intracellular ciliogenesis pathway. May play a role in breast cancer cell motility by regulating actin cytoskeleton. The protein is Rab11 family-interacting protein 3 of Homo sapiens (Human).